Consider the following 351-residue polypeptide: Protein-glutamate methylesterase/protein-glutamine glutaminase (351 aa).

Positions 3 to 120 constitute a Response regulatory domain; that stretch reads KTLVVDDSAL…EISKIENELV (118 aa). Residue Asp-54 is modified to 4-aspartylphosphate. The 188-residue stretch at 160-347 folds into the CheB-type methylesterase domain; sequence ILIGSSTGGP…EQIVRMIEVK (188 aa). Active-site residues include Ser-165, His-192, and Asp-289.

This sequence belongs to the CheB family. Post-translationally, phosphorylated by CheA. Phosphorylation of the N-terminal regulatory domain activates the methylesterase activity.

Its subcellular location is the cytoplasm. The catalysed reaction is [protein]-L-glutamate 5-O-methyl ester + H2O = L-glutamyl-[protein] + methanol + H(+). The enzyme catalyses L-glutaminyl-[protein] + H2O = L-glutamyl-[protein] + NH4(+). Its function is as follows. Involved in chemotaxis. Part of a chemotaxis signal transduction system that modulates chemotaxis in response to various stimuli. Catalyzes the demethylation of specific methylglutamate residues introduced into the chemoreceptors (methyl-accepting chemotaxis proteins or MCP) by CheR. Also mediates the irreversible deamidation of specific glutamine residues to glutamic acid. In Methanococcoides burtonii (strain DSM 6242 / NBRC 107633 / OCM 468 / ACE-M), this protein is Protein-glutamate methylesterase/protein-glutamine glutaminase.